The following is a 151-amino-acid chain: Deoxyuridine 5'-triphosphate nucleotidohydrolase (151 aa).

Residues 70–72 (RSG), Asn83, 87–89 (LID), and Met97 each bind substrate.

This sequence belongs to the dUTPase family. Mg(2+) serves as cofactor.

It catalyses the reaction dUTP + H2O = dUMP + diphosphate + H(+). Its pathway is pyrimidine metabolism; dUMP biosynthesis; dUMP from dCTP (dUTP route): step 2/2. This enzyme is involved in nucleotide metabolism: it produces dUMP, the immediate precursor of thymidine nucleotides and it decreases the intracellular concentration of dUTP so that uracil cannot be incorporated into DNA. The protein is Deoxyuridine 5'-triphosphate nucleotidohydrolase of Pseudomonas putida (strain W619).